The sequence spans 100 residues: Succinate dehydrogenase subunit 7B, mitochondrial (100 aa).

The disordered stretch occupies residues 1–25 (MAFLLNNASISSHLRSSSSQKTGDA). Residues 1–32 (MAFLLNNASISSHLRSSSSQKTGDALSISRRG) constitute a mitochondrion transit peptide. Residues 9–19 (SISSHLRSSSS) are compositionally biased toward low complexity.

In terms of assembly, component of complex II composed of eight subunits in plants: four classical SDH subunits SDH1, SDH2, SDH3 and SDH4 (a flavoprotein (FP), an iron-sulfur protein (IP), and a cytochrome b composed of a large and a small subunit.), as well as four subunits unknown in mitochondria from bacteria and heterotrophic eukaryotes.

It is found in the mitochondrion inner membrane. It participates in carbohydrate metabolism; tricarboxylic acid cycle. This chain is Succinate dehydrogenase subunit 7B, mitochondrial, found in Arabidopsis thaliana (Mouse-ear cress).